The primary structure comprises 417 residues: Serine hydroxymethyltransferase (417 aa).

Residues Leu121 and 125 to 127 each bind (6S)-5,6,7,8-tetrahydrofolate; that span reads GHL. Residue Lys229 is modified to N6-(pyridoxal phosphate)lysine. 355-357 contributes to the (6S)-5,6,7,8-tetrahydrofolate binding site; it reads SPF.

The protein belongs to the SHMT family. In terms of assembly, homodimer. The cofactor is pyridoxal 5'-phosphate.

The protein localises to the cytoplasm. The enzyme catalyses (6R)-5,10-methylene-5,6,7,8-tetrahydrofolate + glycine + H2O = (6S)-5,6,7,8-tetrahydrofolate + L-serine. The protein operates within one-carbon metabolism; tetrahydrofolate interconversion. It functions in the pathway amino-acid biosynthesis; glycine biosynthesis; glycine from L-serine: step 1/1. Its function is as follows. Catalyzes the reversible interconversion of serine and glycine with tetrahydrofolate (THF) serving as the one-carbon carrier. This reaction serves as the major source of one-carbon groups required for the biosynthesis of purines, thymidylate, methionine, and other important biomolecules. Also exhibits THF-independent aldolase activity toward beta-hydroxyamino acids, producing glycine and aldehydes, via a retro-aldol mechanism. The sequence is that of Serine hydroxymethyltransferase from Shewanella baltica (strain OS185).